A 593-amino-acid chain; its full sequence is UvrABC system protein C (593 aa).

Residues 17–94 form the GIY-YIG domain; it reads MEPGCYLMKD…IKQYQPRYNI (78 aa). One can recognise a UVR domain in the interval 199-234; the sequence is KTILKSLEERMLTASESLDFERAKEYRDLIQHIQNL.

This sequence belongs to the UvrC family. Interacts with UvrB in an incision complex.

The protein localises to the cytoplasm. Its function is as follows. The UvrABC repair system catalyzes the recognition and processing of DNA lesions. UvrC both incises the 5' and 3' sides of the lesion. The N-terminal half is responsible for the 3' incision and the C-terminal half is responsible for the 5' incision. The protein is UvrABC system protein C of Staphylococcus aureus (strain MRSA252).